The chain runs to 62 residues: Disintegrin schistatin-like subunit A (62 aa).

A Disintegrin domain is found at 1-62 (SVNPCCDPVI…TTDCPRNRYN (62 aa)). Disulfide bonds link C5/C28, C19/C25, C24/C49, and C37/C56. The Cell attachment site motif lies at 41–43 (RGD).

The protein belongs to the disintegrin family. Dimeric disintegrin subfamily. Heterodimer with subunit B; disulfide-linked. As to expression, expressed by the venom gland.

Its subcellular location is the secreted. Functionally, may bind to both alpha-IIb/beta-3 (ITGA2B/ITGB3) and alpha-V/beta-3 (ITGAV/ITGB3) integrins, and may inhibit platelet aggregation. The polypeptide is Disintegrin schistatin-like subunit A (Echis carinatus (Saw-scaled viper)).